Reading from the N-terminus, the 37-residue chain is Cytochrome b6-f complex subunit 5 (37 aa).

The helical transmembrane segment at 5–25 (LLCGIVLGLIPVTLAGLFFAA) threads the bilayer.

Belongs to the PetG family. As to quaternary structure, the 4 large subunits of the cytochrome b6-f complex are cytochrome b6, subunit IV (17 kDa polypeptide, PetD), cytochrome f and the Rieske protein, while the 4 small subunits are PetG, PetL, PetM and PetN. The complex functions as a dimer.

It localises to the cellular thylakoid membrane. Functionally, component of the cytochrome b6-f complex, which mediates electron transfer between photosystem II (PSII) and photosystem I (PSI), cyclic electron flow around PSI, and state transitions. PetG is required for either the stability or assembly of the cytochrome b6-f complex. This chain is Cytochrome b6-f complex subunit 5, found in Thermosynechococcus vestitus (strain NIES-2133 / IAM M-273 / BP-1).